A 608-amino-acid chain; its full sequence is Albumin 1 (608 aa).

Residues 1–14 (MQWLSVCSLLVLLS) form the signal peptide. The propeptide occupies 15–18 (VLSR). Albumin domains follow at residues 19–205 (SQAQ…TFQH), 206–398 (AVMK…AGSD), and 402–600 (KITD…KLVS). 18 cysteine pairs are disulfide-bonded: cysteine 26–cysteine 72, cysteine 71–cysteine 80, cysteine 93–cysteine 108, cysteine 107–cysteine 118, cysteine 142–cysteine 187, cysteine 186–cysteine 195, cysteine 218–cysteine 264, cysteine 263–cysteine 271, cysteine 283–cysteine 299, cysteine 298–cysteine 309, cysteine 336–cysteine 381, cysteine 380–cysteine 389, cysteine 414–cysteine 460, cysteine 459–cysteine 471, cysteine 484–cysteine 500, cysteine 499–cysteine 510, cysteine 537–cysteine 582, and cysteine 581–cysteine 590. Residue asparagine 501 is glycosylated (N-linked (GlcNAc...) asparagine).

It belongs to the ALB/AFP/VDB family. As to expression, plasma.

Its subcellular location is the secreted. Binds water, Ca(2+), Na(+), K(+), fatty acids, hormones, bilirubin and drugs. Its main function is the regulation of the colloidal osmotic pressure of blood. In Salmo salar (Atlantic salmon), this protein is Albumin 1 (alb1).